Here is a 165-residue protein sequence, read N- to C-terminus: Mediator of RNA polymerase II transcription subunit 10 (165 aa).

2 disordered regions span residues serine 54 to leucine 81 and leucine 143 to glycine 165. The segment covering threonine 62 to asparagine 77 has biased composition (polar residues).

It belongs to the Mediator complex subunit 10 family. Component of the Mediator complex.

It localises to the nucleus. Its function is as follows. Component of the Mediator complex, a coactivator involved in the regulated transcription of nearly all RNA polymerase II-dependent genes. Mediator functions as a bridge to convey information from gene-specific regulatory proteins to the basal RNA polymerase II transcription machinery. Mediator is recruited to promoters by direct interactions with regulatory proteins and serves as a scaffold for the assembly of a functional preinitiation complex with RNA polymerase II and the general transcription factors. The polypeptide is Mediator of RNA polymerase II transcription subunit 10 (nut2) (Emericella nidulans (strain FGSC A4 / ATCC 38163 / CBS 112.46 / NRRL 194 / M139) (Aspergillus nidulans)).